The following is a 2067-amino-acid chain: Separin (2067 aa).

Disordered regions lie at residues 51–91, 140–167, 1316–1363, and 1449–1478; these read RTAR…AQDV, KKDASPTKRGTTTKGRVKTSQPDLTDNE, DLEE…SVEA, and LEPKAASESSSKSATRKTRAPTRGTRTKAQ. Over residues 55 to 86 the composition is skewed to low complexity; that stretch reads GTKATATNATASSRAKTTRTKSTSTSTTRTKT. Composition is skewed to low complexity over residues 1333–1354 and 1449–1461; these read TRQPATTATRRTRSATTSARST and LEPKAASESSSKS. Residues 1880-1975 enclose the Peptidase C50 domain; that stretch reads RRNGTYILNP…SGTLTEAGEY (96 aa). Cys-1964 is a catalytic residue.

The protein localises to the nucleus. The enzyme catalyses All bonds known to be hydrolyzed by this endopeptidase have arginine in P1 and an acidic residue in P4. P6 is often occupied by an acidic residue or by a hydroxy-amino-acid residue, the phosphorylation of which enhances cleavage.. Functionally, required for nuclear division. Could function in the mitotic spindle. The sequence is that of Separin (bimB) from Emericella nidulans (strain FGSC A4 / ATCC 38163 / CBS 112.46 / NRRL 194 / M139) (Aspergillus nidulans).